A 200-amino-acid polypeptide reads, in one-letter code: HTH-type transcriptional regulator Hpr (200 aa).

The 145-residue stretch at 13 to 157 folds into the HTH marR-type domain; sequence AMLFSQRIAQ…MMCIVRNIYG (145 aa). The segment at residues 63–86 is a DNA-binding region (H-T-H motif); the sequence is ISEIAKFGVMHVSTAFNFSKKLEE.

In terms of assembly, homodimer.

Negative regulator of protease production and sporulation. The chain is HTH-type transcriptional regulator Hpr from Geobacillus thermodenitrificans (strain NG80-2).